We begin with the raw amino-acid sequence, 121 residues long: Heme-degrading monooxygenase (121 aa).

The ABM domain maps to Ile-2–Val-101. A Fe cation-binding site is contributed by Asn-6. The segment at Lys-76–Lys-98 is disordered. The segment covering Asp-78–Lys-98 has biased composition (basic and acidic residues). His-84 lines the heme pocket.

This sequence belongs to the antibiotic biosynthesis monooxygenase family. Heme-degrading monooxygenase IsdG subfamily. In terms of assembly, homodimer.

It is found in the cytoplasm. It catalyses the reaction heme b + 3 reduced [NADPH--hemoprotein reductase] + 3 O2 = biliverdin IXalpha + CO + Fe(2+) + 3 oxidized [NADPH--hemoprotein reductase] + 3 H2O + H(+). In terms of biological role, allows bacterial pathogens to use the host heme as an iron source. Catalyzes the oxidative degradation of the heme macrocyclic porphyrin ring to the biliverdin in the presence of a suitable electron donor such as ascorbate or NADPH--cytochrome P450 reductase, with subsequent release of free iron. This Listeria welshimeri serovar 6b (strain ATCC 35897 / DSM 20650 / CCUG 15529 / CIP 8149 / NCTC 11857 / SLCC 5334 / V8) protein is Heme-degrading monooxygenase.